The sequence spans 418 residues: Tyrosine--tRNA ligase (418 aa).

Tyr-38 lines the L-tyrosine pocket. Positions 43–52 match the 'HIGH' region motif; sequence CTAKSLHVGS. Positions 175 and 179 each coordinate L-tyrosine. The 'KMSKS' region motif lies at 235-239; that stretch reads KMGKT. Residue Lys-238 participates in ATP binding. Residues 348–413 enclose the S4 RNA-binding domain; sequence LPIIKLLQIS…CGKKRHLKIM (66 aa).

Belongs to the class-I aminoacyl-tRNA synthetase family. TyrS type 1 subfamily. In terms of assembly, homodimer.

The protein localises to the cytoplasm. It catalyses the reaction tRNA(Tyr) + L-tyrosine + ATP = L-tyrosyl-tRNA(Tyr) + AMP + diphosphate + H(+). Catalyzes the attachment of tyrosine to tRNA(Tyr) in a two-step reaction: tyrosine is first activated by ATP to form Tyr-AMP and then transferred to the acceptor end of tRNA(Tyr). This Ehrlichia canis (strain Jake) protein is Tyrosine--tRNA ligase.